The chain runs to 91 residues: Acylphosphatase (91 aa).

Positions 3–91 constitute an Acylphosphatase-like domain; it reads HIKVNVKGQV…TELTKFEVKY (89 aa). Catalysis depends on residues R18 and N36.

The protein belongs to the acylphosphatase family.

The catalysed reaction is an acyl phosphate + H2O = a carboxylate + phosphate + H(+). In Oceanobacillus iheyensis (strain DSM 14371 / CIP 107618 / JCM 11309 / KCTC 3954 / HTE831), this protein is Acylphosphatase (acyP).